The sequence spans 387 residues: 1-hydroxy-2-naphthoate 1,2-dioxygenasee (387 aa).

2 Cupin type-2 domains span residues 103-171 and 271-337; these read FQLV…VWLD and VQRL…VLLF.

In terms of assembly, homohexamer. It depends on Fe(2+) as a cofactor.

It catalyses the reaction 1-hydroxy-2-naphthoate + O2 = (3Z)-4-(2-carboxyphenyl)-2-oxobut-3-enoate + H(+). Dioxygenase involved in phenanthrene catabolism by mediating cleavage of 1-hydroxy-2-naphthoate. The polypeptide is 1-hydroxy-2-naphthoate 1,2-dioxygenasee (phdI) (Nocardioides sp. (strain KP7)).